The primary structure comprises 79 residues: Small ribosomal subunit protein bS16 (79 aa).

Belongs to the bacterial ribosomal protein bS16 family.

This is Small ribosomal subunit protein bS16 from Oleidesulfovibrio alaskensis (strain ATCC BAA-1058 / DSM 17464 / G20) (Desulfovibrio alaskensis).